The chain runs to 689 residues: Methionine--tRNA ligase (689 aa).

Positions 13–23 (PYANGNFHIGH) match the 'HIGH' region motif. Residues C144, C147, C157, and C160 each coordinate Zn(2+). The 'KMSKS' region motif lies at 341–345 (KMSKS). An ATP-binding site is contributed by K344. The tRNA-binding domain maps to 583–689 (DFAKVDLRIA…PGASPGLRVR (107 aa)).

Belongs to the class-I aminoacyl-tRNA synthetase family. MetG type 1 subfamily. In terms of assembly, homodimer. It depends on Zn(2+) as a cofactor.

It localises to the cytoplasm. The enzyme catalyses tRNA(Met) + L-methionine + ATP = L-methionyl-tRNA(Met) + AMP + diphosphate. Functionally, is required not only for elongation of protein synthesis but also for the initiation of all mRNA translation through initiator tRNA(fMet) aminoacylation. This chain is Methionine--tRNA ligase, found in Polaromonas sp. (strain JS666 / ATCC BAA-500).